A 355-amino-acid polypeptide reads, in one-letter code: Anhydro-N-acetylmuramic acid kinase (355 aa).

Residue 9–16 (GTSLDGVD) coordinates ATP.

This sequence belongs to the anhydro-N-acetylmuramic acid kinase family.

It catalyses the reaction 1,6-anhydro-N-acetyl-beta-muramate + ATP + H2O = N-acetyl-D-muramate 6-phosphate + ADP + H(+). Its pathway is amino-sugar metabolism; 1,6-anhydro-N-acetylmuramate degradation. The protein operates within cell wall biogenesis; peptidoglycan recycling. In terms of biological role, catalyzes the specific phosphorylation of 1,6-anhydro-N-acetylmuramic acid (anhMurNAc) with the simultaneous cleavage of the 1,6-anhydro ring, generating MurNAc-6-P. Is required for the utilization of anhMurNAc either imported from the medium or derived from its own cell wall murein, and thus plays a role in cell wall recycling. The protein is Anhydro-N-acetylmuramic acid kinase of Paramagnetospirillum magneticum (strain ATCC 700264 / AMB-1) (Magnetospirillum magneticum).